Consider the following 275-residue polypeptide: Diaminopimelate epimerase (275 aa).

Residues N12, Q45, and N65 each coordinate substrate. The active-site Proton donor is C74. Substrate is bound by residues 75 to 76, N158, N191, and 209 to 210; these read GN and ER. C218 (proton acceptor) is an active-site residue. 219-220 is a binding site for substrate; the sequence is GT.

It belongs to the diaminopimelate epimerase family. In terms of assembly, homodimer.

The protein localises to the cytoplasm. The enzyme catalyses (2S,6S)-2,6-diaminopimelate = meso-2,6-diaminopimelate. It functions in the pathway amino-acid biosynthesis; L-lysine biosynthesis via DAP pathway; DL-2,6-diaminopimelate from LL-2,6-diaminopimelate: step 1/1. Functionally, catalyzes the stereoinversion of LL-2,6-diaminopimelate (L,L-DAP) to meso-diaminopimelate (meso-DAP), a precursor of L-lysine and an essential component of the bacterial peptidoglycan. This is Diaminopimelate epimerase from Shewanella sp. (strain MR-4).